Reading from the N-terminus, the 668-residue chain is tRNA 5-methylaminomethyl-2-thiouridine biosynthesis bifunctional protein MnmC (668 aa).

The segment at 1-245 (MKHYSIQPAN…KREMLCGVME (245 aa)) is tRNA (mnm(5)s(2)U34)-methyltransferase. The FAD-dependent cmnm(5)s(2)U34 oxidoreductase stretch occupies residues 270 to 668 (IGGGIACALL…LLKGKAVKAG (399 aa)).

It in the N-terminal section; belongs to the methyltransferase superfamily. tRNA (mnm(5)s(2)U34)-methyltransferase family. In the C-terminal section; belongs to the DAO family. Requires FAD as cofactor.

It is found in the cytoplasm. It catalyses the reaction 5-aminomethyl-2-thiouridine(34) in tRNA + S-adenosyl-L-methionine = 5-methylaminomethyl-2-thiouridine(34) in tRNA + S-adenosyl-L-homocysteine + H(+). Its function is as follows. Catalyzes the last two steps in the biosynthesis of 5-methylaminomethyl-2-thiouridine (mnm(5)s(2)U) at the wobble position (U34) in tRNA. Catalyzes the FAD-dependent demodification of cmnm(5)s(2)U34 to nm(5)s(2)U34, followed by the transfer of a methyl group from S-adenosyl-L-methionine to nm(5)s(2)U34, to form mnm(5)s(2)U34. In Shigella boydii serotype 18 (strain CDC 3083-94 / BS512), this protein is tRNA 5-methylaminomethyl-2-thiouridine biosynthesis bifunctional protein MnmC.